Consider the following 1550-residue polypeptide: Pentafunctional AROM polypeptide (1550 aa).

Positions Met1–Lys379 are 3-dehydroquinate synthase. Residues Asp42–Asn44, Glu80–Lys83, Gly111–Val113, and Asp116 each bind NAD(+). Arg127 contacts 7-phospho-2-dehydro-3-deoxy-D-arabino-heptonate. An NAD(+)-binding site is contributed by Thr136–Thr137. Residues Asp143 and Lys149 each contribute to the 7-phospho-2-dehydro-3-deoxy-D-arabino-heptonate site. NAD(+) is bound at residue Lys158. Residue Asn159 coordinates 7-phospho-2-dehydro-3-deoxy-D-arabino-heptonate. Residues Phe176 to Thr179 and Asn187 each bind NAD(+). Glu191 serves as a coordination point for Zn(2+). Residues Glu191–Lys194 and Lys243 each bind 7-phospho-2-dehydro-3-deoxy-D-arabino-heptonate. Glu253 serves as the catalytic Proton acceptor; for 3-dehydroquinate synthase activity. 7-phospho-2-dehydro-3-deoxy-D-arabino-heptonate-binding positions include Arg257 to Asn261 and His264. Position 264 (His264) interacts with Zn(2+). Residue His268 is the Proton acceptor; for 3-dehydroquinate synthase activity of the active site. His280 and Lys351 together coordinate 7-phospho-2-dehydro-3-deoxy-D-arabino-heptonate. His280 lines the Zn(2+) pocket. The segment at Val392–Ile837 is EPSP synthase. Residues Asp857–Val1047 are shikimate kinase. Gly864–Ser871 is a binding site for ATP. Residues Leu1048–Glu1257 are 3-dehydroquinase. Catalysis depends on Arg1193, which acts as the Schiff-base intermediate with substrate; for 3-dehydroquinate dehydratase activity. The interval Ala1270–Glu1550 is shikimate dehydrogenase.

It in the N-terminal section; belongs to the sugar phosphate cyclases superfamily. Dehydroquinate synthase family. This sequence in the 2nd section; belongs to the EPSP synthase family. The protein in the 3rd section; belongs to the shikimate kinase family. In the 4th section; belongs to the type-I 3-dehydroquinase family. It in the C-terminal section; belongs to the shikimate dehydrogenase family. Homodimer. Requires Zn(2+) as cofactor.

The protein localises to the cytoplasm. It carries out the reaction 7-phospho-2-dehydro-3-deoxy-D-arabino-heptonate = 3-dehydroquinate + phosphate. The enzyme catalyses 3-dehydroquinate = 3-dehydroshikimate + H2O. It catalyses the reaction shikimate + NADP(+) = 3-dehydroshikimate + NADPH + H(+). The catalysed reaction is shikimate + ATP = 3-phosphoshikimate + ADP + H(+). It carries out the reaction 3-phosphoshikimate + phosphoenolpyruvate = 5-O-(1-carboxyvinyl)-3-phosphoshikimate + phosphate. It participates in metabolic intermediate biosynthesis; chorismate biosynthesis; chorismate from D-erythrose 4-phosphate and phosphoenolpyruvate: step 2/7. The protein operates within metabolic intermediate biosynthesis; chorismate biosynthesis; chorismate from D-erythrose 4-phosphate and phosphoenolpyruvate: step 3/7. It functions in the pathway metabolic intermediate biosynthesis; chorismate biosynthesis; chorismate from D-erythrose 4-phosphate and phosphoenolpyruvate: step 4/7. Its pathway is metabolic intermediate biosynthesis; chorismate biosynthesis; chorismate from D-erythrose 4-phosphate and phosphoenolpyruvate: step 5/7. It participates in metabolic intermediate biosynthesis; chorismate biosynthesis; chorismate from D-erythrose 4-phosphate and phosphoenolpyruvate: step 6/7. Functionally, the AROM polypeptide catalyzes 5 consecutive enzymatic reactions in prechorismate polyaromatic amino acid biosynthesis. The sequence is that of Pentafunctional AROM polypeptide from Candida dubliniensis (strain CD36 / ATCC MYA-646 / CBS 7987 / NCPF 3949 / NRRL Y-17841) (Yeast).